The primary structure comprises 451 residues: Tol-Pal system protein TolB 1 (451 aa).

The signal sequence occupies residues 1–19 (MTLRMLFAFALLAAAPAQA). Residues 18-29 (QAQQTEPQPAEE) are compositionally biased toward low complexity. Disordered stretches follow at residues 18-37 (QAQQTEPQPAEEGGLSGTVS) and 431-451 (NERRLSTPGDASDPAWGPLLP).

This sequence belongs to the TolB family. The Tol-Pal system is composed of five core proteins: the inner membrane proteins TolA, TolQ and TolR, the periplasmic protein TolB and the outer membrane protein Pal. They form a network linking the inner and outer membranes and the peptidoglycan layer.

Its subcellular location is the periplasm. Part of the Tol-Pal system, which plays a role in outer membrane invagination during cell division and is important for maintaining outer membrane integrity. This Novosphingobium aromaticivorans (strain ATCC 700278 / DSM 12444 / CCUG 56034 / CIP 105152 / NBRC 16084 / F199) protein is Tol-Pal system protein TolB 1.